Consider the following 325-residue polypeptide: Lactonase drp35 (325 aa).

10 residues coordinate Ca(2+): E46, T108, G110, D128, T131, Y133, D136, N183, D234, and S235. The active-site Proton donor is D234.

The protein belongs to the SMP-30/CGR1 family. Requires Ca(2+) as cofactor.

The protein localises to the cytoplasm. Its function is as follows. Exhibits lactonase activity. Acts in cells with perturbed membrane integrity and is possibly related to the membrane homeostasis. The polypeptide is Lactonase drp35 (drp35) (Staphylococcus epidermidis (strain ATCC 35984 / DSM 28319 / BCRC 17069 / CCUG 31568 / BM 3577 / RP62A)).